A 272-amino-acid polypeptide reads, in one-letter code: Shikimate dehydrogenase (NADP(+)) (272 aa).

Shikimate-binding positions include 14–16 (SKS) and Thr-61. The Proton acceptor role is filled by Lys-65. Glu-77 is an NADP(+) binding site. The shikimate site is built by Asn-86 and Asp-102. NADP(+) is bound by residues 126-130 (GAGGA), 149-154 (NRTVSR), and Met-213. Shikimate is bound at residue Tyr-215. Gly-237 provides a ligand contact to NADP(+).

It belongs to the shikimate dehydrogenase family. Homodimer.

It catalyses the reaction shikimate + NADP(+) = 3-dehydroshikimate + NADPH + H(+). It functions in the pathway metabolic intermediate biosynthesis; chorismate biosynthesis; chorismate from D-erythrose 4-phosphate and phosphoenolpyruvate: step 4/7. In terms of biological role, involved in the biosynthesis of the chorismate, which leads to the biosynthesis of aromatic amino acids. Catalyzes the reversible NADPH linked reduction of 3-dehydroshikimate (DHSA) to yield shikimate (SA). The chain is Shikimate dehydrogenase (NADP(+)) from Escherichia coli O6:K15:H31 (strain 536 / UPEC).